The sequence spans 395 residues: NADH-quinone oxidoreductase subunit D (395 aa).

Belongs to the complex I 49 kDa subunit family. In terms of assembly, NDH-1 is composed of 14 different subunits. Subunits NuoB, C, D, E, F, and G constitute the peripheral sector of the complex.

It localises to the cell inner membrane. It catalyses the reaction a quinone + NADH + 5 H(+)(in) = a quinol + NAD(+) + 4 H(+)(out). In terms of biological role, NDH-1 shuttles electrons from NADH, via FMN and iron-sulfur (Fe-S) centers, to quinones in the respiratory chain. The immediate electron acceptor for the enzyme in this species is believed to be a menaquinone. Couples the redox reaction to proton translocation (for every two electrons transferred, four hydrogen ions are translocated across the cytoplasmic membrane), and thus conserves the redox energy in a proton gradient. The sequence is that of NADH-quinone oxidoreductase subunit D from Chlorobium luteolum (strain DSM 273 / BCRC 81028 / 2530) (Pelodictyon luteolum).